The following is a 1338-amino-acid chain: Centrosomal P4.1-associated protein (1338 aa).

Residues 190 to 211 form a disordered region; the sequence is GLSLLPDDQSQKHRSPGNTTTG. Phosphoserine occurs at positions 260 and 316. Positions 319 to 394 are alpha/beta-tubulin binding; that stretch reads VANIEERPIK…FTNAKSKFQK (76 aa). Disordered stretches follow at residues 386-414, 436-479, and 521-551; these read TNAK…PLFK, PILK…QTGK, and QGKD…ESES. The span at 400–409 shows a compositional bias: polar residues; that stretch reads LVTNQSTSED. Residue Ser540 is modified to Phosphoserine. Basic and acidic residues predominate over residues 541 to 550; that stretch reads PIRETMKESE. The residue at position 589 (Ser589) is a Phosphoserine; by PLK2. Ser595 is subject to Phosphoserine; by PLK2 and PLK4. 3 disordered regions span residues 611–789, 845–865, and 1096–1153; these read HRMS…LSLS, VKRG…TSEL, and YLPM…QGEI. A compositionally biased stretch (basic and acidic residues) spans 635-650; the sequence is NRSEDLDHTAREKESE. Over residues 679-689 the composition is skewed to polar residues; that stretch reads QKSTSENQTEW. Residues 717 to 764 are compositionally biased toward basic and acidic residues; it reads STEDRERGISSREDSPQVCDDKGPFKDTRTQEDKRRDVDLDLSDKDYS. At Ser759 the chain carries Phosphoserine. Positions 895 to 1338 are interaction with STIL; the sequence is QPPGDNARSQ…EGNVLMDTEL (444 aa). Positions 1140–1149 are enriched in acidic residues; the sequence is YKEEEEDQDI.

This sequence belongs to the TCP10 family. Forms homodimers. Associates with microtubules plus ends; binds to beta-tubulin subunits exposed on microtubule outer surface at its distal tip; also associates with microtubule lattice. Associated with the gamma-tubulin complex. Interacts with the head domain of EPB41. Interacts with LYST. Interacts with CEP152 (via C-terminus). Interacts with STIL. Forms a complex with STIL and SASS6. In terms of processing, phosphorylation at Ser-589 and Ser-595 by PLK2 is required for procentriole formation and centriole elongation. Phosphorylation by PLK2 oscillates during the cell cycle: it increases at G1/S transition and decreases during the exit from mitosis. Phosphorylation at Ser-595 is also mediated by PLK4 but is not a critical step in PLK4 function in procentriole assembly.

The protein localises to the cytoplasm. The protein resides in the cytoskeleton. It localises to the microtubule organizing center. It is found in the centrosome. Its subcellular location is the centriole. In terms of biological role, plays an important role in cell division and centrosome function by participating in centriole duplication. Inhibits microtubule nucleation from the centrosome. Involved in the regulation of slow processive growth of centriolar microtubules. Acts as a microtubule plus-end tracking protein that stabilizes centriolar microtubules and inhibits microtubule polymerization and extension from the distal ends of centrioles. Required for centriole elongation and for STIL-mediated centriole amplification. Required for the recruitment of CEP295 to the proximal end of new-born centrioles at the centriolar microtubule wall during early S phase in a PLK4-dependent manner. May be involved in the control of centriolar-microtubule growth by acting as a regulator of tubulin release. This Homo sapiens (Human) protein is Centrosomal P4.1-associated protein.